Reading from the N-terminus, the 347-residue chain is tRNA(Ile)-lysidine synthase (347 aa).

ATP is bound at residue 27 to 32 (SGGADS). The disordered stretch occupies residues 243–263 (AAPASPSHVEGEASAPHDAAH).

This sequence belongs to the tRNA(Ile)-lysidine synthase family.

It is found in the cytoplasm. It carries out the reaction cytidine(34) in tRNA(Ile2) + L-lysine + ATP = lysidine(34) in tRNA(Ile2) + AMP + diphosphate + H(+). In terms of biological role, ligates lysine onto the cytidine present at position 34 of the AUA codon-specific tRNA(Ile) that contains the anticodon CAU, in an ATP-dependent manner. Cytidine is converted to lysidine, thus changing the amino acid specificity of the tRNA from methionine to isoleucine. The polypeptide is tRNA(Ile)-lysidine synthase (Nitratidesulfovibrio vulgaris (strain ATCC 29579 / DSM 644 / CCUG 34227 / NCIMB 8303 / VKM B-1760 / Hildenborough) (Desulfovibrio vulgaris)).